We begin with the raw amino-acid sequence, 714 residues long: Fatty acid oxidation complex subunit alpha (714 aa).

Residues 1–190 are enoyl-CoA hydratase; it reads MEMASAFTLN…KLGLVDDVVP (190 aa). Residues 306–714 are 3-hydroxyacyl-CoA dehydrogenase; that stretch reads APLNSVGILG…FWKTTATDLQ (409 aa).

In the N-terminal section; belongs to the enoyl-CoA hydratase/isomerase family. This sequence in the central section; belongs to the 3-hydroxyacyl-CoA dehydrogenase family. As to quaternary structure, heterotetramer of two alpha chains (FadJ) and two beta chains (FadI).

It is found in the cytoplasm. The enzyme catalyses a (3S)-3-hydroxyacyl-CoA = a (2E)-enoyl-CoA + H2O. The catalysed reaction is a 4-saturated-(3S)-3-hydroxyacyl-CoA = a (3E)-enoyl-CoA + H2O. It carries out the reaction a (3S)-3-hydroxyacyl-CoA + NAD(+) = a 3-oxoacyl-CoA + NADH + H(+). It catalyses the reaction (3S)-3-hydroxybutanoyl-CoA = (3R)-3-hydroxybutanoyl-CoA. Its pathway is lipid metabolism; fatty acid beta-oxidation. Functionally, catalyzes the formation of a hydroxyacyl-CoA by addition of water on enoyl-CoA. Also exhibits 3-hydroxyacyl-CoA epimerase and 3-hydroxyacyl-CoA dehydrogenase activities. This chain is Fatty acid oxidation complex subunit alpha, found in Escherichia coli O6:K15:H31 (strain 536 / UPEC).